Reading from the N-terminus, the 395-residue chain is Acetate kinase (395 aa).

N7 contacts Mg(2+). An ATP-binding site is contributed by K14. R92 is a substrate binding site. Residue D149 is the Proton donor/acceptor of the active site. ATP is bound by residues 207–211 (HLGNG), 282–284 (DMR), and 329–333 (GIGEN). E382 serves as a coordination point for Mg(2+).

Belongs to the acetokinase family. In terms of assembly, homodimer. The cofactor is Mg(2+). Mn(2+) serves as cofactor.

It localises to the cytoplasm. It carries out the reaction acetate + ATP = acetyl phosphate + ADP. Its pathway is metabolic intermediate biosynthesis; acetyl-CoA biosynthesis; acetyl-CoA from acetate: step 1/2. In terms of biological role, catalyzes the formation of acetyl phosphate from acetate and ATP. Can also catalyze the reverse reaction. In Brachyspira hyodysenteriae (strain ATCC 49526 / WA1), this protein is Acetate kinase.